The primary structure comprises 429 residues: Adenylosuccinate synthetase (429 aa).

GTP is bound by residues 12-18 (GDEGKGK) and 40-42 (GHT). Asp13 (proton acceptor) is an active-site residue. The Mg(2+) site is built by Asp13 and Gly40. Residues 13–16 (DEGK), 38–41 (NAGH), Thr129, Arg143, Gln223, Thr238, and Arg302 each bind IMP. The active-site Proton donor is the His41. Residue 298–304 (TVTGRKR) participates in substrate binding. GTP-binding positions include Arg304, 330–332 (KLD), and 412–414 (STS).

Belongs to the adenylosuccinate synthetase family. As to quaternary structure, homodimer. Mg(2+) serves as cofactor.

Its subcellular location is the cytoplasm. It carries out the reaction IMP + L-aspartate + GTP = N(6)-(1,2-dicarboxyethyl)-AMP + GDP + phosphate + 2 H(+). It functions in the pathway purine metabolism; AMP biosynthesis via de novo pathway; AMP from IMP: step 1/2. Plays an important role in the de novo pathway of purine nucleotide biosynthesis. Catalyzes the first committed step in the biosynthesis of AMP from IMP. In Novosphingobium aromaticivorans (strain ATCC 700278 / DSM 12444 / CCUG 56034 / CIP 105152 / NBRC 16084 / F199), this protein is Adenylosuccinate synthetase.